A 216-amino-acid chain; its full sequence is RNA pyrophosphohydrolase (216 aa).

Residues 6–149 form the Nudix hydrolase domain; the sequence is GFRPNVGIIL…KRDVYQLALT (144 aa). Residues 38-59 carry the Nudix box motif; the sequence is GGIKYGETPMQAMYRELHEETG.

This sequence belongs to the Nudix hydrolase family. RppH subfamily. It depends on a divalent metal cation as a cofactor.

Accelerates the degradation of transcripts by removing pyrophosphate from the 5'-end of triphosphorylated RNA, leading to a more labile monophosphorylated state that can stimulate subsequent ribonuclease cleavage. This chain is RNA pyrophosphohydrolase, found in Burkholderia ambifaria (strain MC40-6).